Here is a 100-residue protein sequence, read N- to C-terminus: Small ribosomal subunit protein uS14 (100 aa).

The protein belongs to the universal ribosomal protein uS14 family. As to quaternary structure, part of the 30S ribosomal subunit. Contacts proteins S3 and S10.

Its function is as follows. Binds 16S rRNA, required for the assembly of 30S particles and may also be responsible for determining the conformation of the 16S rRNA at the A site. In Picosynechococcus sp. (strain ATCC 27264 / PCC 7002 / PR-6) (Agmenellum quadruplicatum), this protein is Small ribosomal subunit protein uS14.